A 428-amino-acid polypeptide reads, in one-letter code: Histidine--tRNA ligase (428 aa).

It belongs to the class-II aminoacyl-tRNA synthetase family. Homodimer.

The protein resides in the cytoplasm. It catalyses the reaction tRNA(His) + L-histidine + ATP = L-histidyl-tRNA(His) + AMP + diphosphate + H(+). This chain is Histidine--tRNA ligase, found in Azotobacter vinelandii (strain DJ / ATCC BAA-1303).